Reading from the N-terminus, the 291-residue chain is 4-diphosphocytidyl-2-C-methyl-D-erythritol kinase (291 aa).

K21 is a catalytic residue. 104 to 114 (PMGGGLGGGSS) lines the ATP pocket. D146 is an active-site residue.

Belongs to the GHMP kinase family. IspE subfamily.

It carries out the reaction 4-CDP-2-C-methyl-D-erythritol + ATP = 4-CDP-2-C-methyl-D-erythritol 2-phosphate + ADP + H(+). It participates in isoprenoid biosynthesis; isopentenyl diphosphate biosynthesis via DXP pathway; isopentenyl diphosphate from 1-deoxy-D-xylulose 5-phosphate: step 3/6. Catalyzes the phosphorylation of the position 2 hydroxy group of 4-diphosphocytidyl-2C-methyl-D-erythritol. This is 4-diphosphocytidyl-2-C-methyl-D-erythritol kinase from Methylococcus capsulatus (strain ATCC 33009 / NCIMB 11132 / Bath).